Reading from the N-terminus, the 851-residue chain is DNA mismatch repair protein MutS (851 aa).

Residue 602-609 participates in ATP binding; the sequence is GPNMSGKS.

This sequence belongs to the DNA mismatch repair MutS family.

Its function is as follows. This protein is involved in the repair of mismatches in DNA. It is possible that it carries out the mismatch recognition step. This protein has a weak ATPase activity. In Streptococcus equi subsp. equi (strain 4047), this protein is DNA mismatch repair protein MutS.